Consider the following 339-residue polypeptide: 4-hydroxy-2-oxovalerate aldolase (339 aa).

One can recognise a Pyruvate carboxyltransferase domain in the interval 8–260; it reads IILHDMCLRD…STDVDVFKLM (253 aa). Substrate is bound at residue 16-17; sequence RD. Position 17 (aspartate 17) interacts with Mn(2+). Histidine 20 functions as the Proton acceptor in the catalytic mechanism. Substrate-binding residues include serine 170 and histidine 199. Mn(2+) is bound by residues histidine 199 and histidine 201. Position 290 (tyrosine 290) interacts with substrate.

The protein belongs to the 4-hydroxy-2-oxovalerate aldolase family.

The catalysed reaction is (S)-4-hydroxy-2-oxopentanoate = acetaldehyde + pyruvate. The chain is 4-hydroxy-2-oxovalerate aldolase from Shewanella woodyi (strain ATCC 51908 / MS32).